A 345-amino-acid chain; its full sequence is Eukaryotic translation initiation factor 3 subunit F (345 aa).

An MPN domain is found at 30-166; that stretch reads VVIQPQAIFS…TRAYISAPVG (137 aa). Residues 310 to 345 form a disordered region; it reads EGASAEAGAQRGQRGGRGGRGGQQRTQERASEEVRA. Positions 312-321 are enriched in low complexity; the sequence is ASAEAGAQRG. Residues 322-331 show a composition bias toward gly residues; the sequence is QRGGRGGRGG. Over residues 335–345 the composition is skewed to basic and acidic residues; that stretch reads TQERASEEVRA.

The protein belongs to the eIF-3 subunit F family. Component of the eukaryotic translation initiation factor 3 (eIF-3) complex.

It is found in the cytoplasm. Its function is as follows. Component of the eukaryotic translation initiation factor 3 (eIF-3) complex, which is involved in protein synthesis of a specialized repertoire of mRNAs and, together with other initiation factors, stimulates binding of mRNA and methionyl-tRNAi to the 40S ribosome. The eIF-3 complex specifically targets and initiates translation of a subset of mRNAs involved in cell proliferation. The chain is Eukaryotic translation initiation factor 3 subunit F from Neosartorya fischeri (strain ATCC 1020 / DSM 3700 / CBS 544.65 / FGSC A1164 / JCM 1740 / NRRL 181 / WB 181) (Aspergillus fischerianus).